The chain runs to 507 residues: Ribonuclease Y (507 aa).

The helical transmembrane segment at 1-21 threads the bilayer; it reads MLWYIVAGAGGLLIGYLIANY. The region spanning 197–282 is the KH domain; that stretch reads TVSTVSLPSD…EMYEKAKQEV (86 aa). Residues 323–416 enclose the HD domain; sequence VLNHSIEVAL…VAAADALSAA (94 aa).

Belongs to the RNase Y family.

It localises to the cell membrane. Endoribonuclease that initiates mRNA decay. This is Ribonuclease Y from Thermotoga sp. (strain RQ2).